A 373-amino-acid polypeptide reads, in one-letter code: Dual-specificity RNA methyltransferase RlmN (373 aa).

The Proton acceptor role is filled by Glu-94. The region spanning 100–339 is the Radical SAM core domain; that stretch reads EDDRATLCVS…VIVRKTRGDD (240 aa). A disulfide bridge links Cys-107 with Cys-344. Residues Cys-114, Cys-118, and Cys-121 each contribute to the [4Fe-4S] cluster site. Residues 168 to 169, Ser-200, 222 to 224, and Asn-301 contribute to the S-adenosyl-L-methionine site; these read GE and SIH. The S-methylcysteine intermediate role is filled by Cys-344.

It belongs to the radical SAM superfamily. RlmN family. The cofactor is [4Fe-4S] cluster.

The protein localises to the cytoplasm. It carries out the reaction adenosine(2503) in 23S rRNA + 2 reduced [2Fe-2S]-[ferredoxin] + 2 S-adenosyl-L-methionine = 2-methyladenosine(2503) in 23S rRNA + 5'-deoxyadenosine + L-methionine + 2 oxidized [2Fe-2S]-[ferredoxin] + S-adenosyl-L-homocysteine. The enzyme catalyses adenosine(37) in tRNA + 2 reduced [2Fe-2S]-[ferredoxin] + 2 S-adenosyl-L-methionine = 2-methyladenosine(37) in tRNA + 5'-deoxyadenosine + L-methionine + 2 oxidized [2Fe-2S]-[ferredoxin] + S-adenosyl-L-homocysteine. Specifically methylates position 2 of adenine 2503 in 23S rRNA and position 2 of adenine 37 in tRNAs. m2A2503 modification seems to play a crucial role in the proofreading step occurring at the peptidyl transferase center and thus would serve to optimize ribosomal fidelity. The polypeptide is Dual-specificity RNA methyltransferase RlmN (Shewanella sp. (strain ANA-3)).